A 371-amino-acid chain; its full sequence is 2-aminoethylphosphonate--pyruvate transaminase (371 aa).

Position 198 is an N6-(pyridoxal phosphate)lysine (Lys198).

This sequence belongs to the class-V pyridoxal-phosphate-dependent aminotransferase family. PhnW subfamily. As to quaternary structure, homodimer. It depends on pyridoxal 5'-phosphate as a cofactor.

The catalysed reaction is (2-aminoethyl)phosphonate + pyruvate = phosphonoacetaldehyde + L-alanine. Involved in phosphonate degradation. The sequence is that of 2-aminoethylphosphonate--pyruvate transaminase from Syntrophobacter fumaroxidans (strain DSM 10017 / MPOB).